The chain runs to 67 residues: Non-specific lipid-transfer protein 2 (67 aa).

Intrachain disulfides connect Cys-3/Cys-35, Cys-11/Cys-25, Cys-26/Cys-61, and Cys-37/Cys-67.

This sequence belongs to the plant LTP family. As to quaternary structure, monomer. Disulfide bonds.

In terms of biological role, plant non-specific lipid-transfer proteins transfer phospholipids as well as galactolipids across membranes. May play a role in wax or cutin deposition in the cell walls of expanding epidermal cells and certain secretory tissues. The chain is Non-specific lipid-transfer protein 2 from Apium graveolens var. rapaceum (Celeriac).